The sequence spans 171 residues: Lipoprotein signal peptidase (171 aa).

4 helical membrane-spanning segments follow: residues 15 to 35 (WLWL…IVMD), 47 to 67 (VLPF…SFLS), 72 to 92 (WQRW…AYWM), and 107 to 127 (ALII…GFVV). Residues Asp-128 and Asp-146 contribute to the active site. Residues 141-161 (AFNLADSTICIGAAMIILDGF) form a helical membrane-spanning segment.

The protein belongs to the peptidase A8 family.

The protein resides in the cell inner membrane. It catalyses the reaction Release of signal peptides from bacterial membrane prolipoproteins. Hydrolyzes -Xaa-Yaa-Zaa-|-(S,diacylglyceryl)Cys-, in which Xaa is hydrophobic (preferably Leu), and Yaa (Ala or Ser) and Zaa (Gly or Ala) have small, neutral side chains.. It participates in protein modification; lipoprotein biosynthesis (signal peptide cleavage). Its function is as follows. This protein specifically catalyzes the removal of signal peptides from prolipoproteins. The chain is Lipoprotein signal peptidase from Vibrio cholerae serotype O1 (strain ATCC 39315 / El Tor Inaba N16961).